The primary structure comprises 354 residues: Vanillate O-demethylase oxygenase subunit (354 aa).

Positions 7–107 constitute a Rieske domain; that stretch reads WYVACTPDEI…VEERYGFIWV (101 aa). The [2Fe-2S] cluster site is built by Cys-47, His-49, Cys-66, and His-69.

The protein belongs to the bacterial ring-hydroxylating dioxygenase alpha subunit family. As to quaternary structure, this demethylase system consists of two proteins: an oxygenase and an oxygenase reductase. [2Fe-2S] cluster serves as cofactor. Fe cation is required as a cofactor.

The catalysed reaction is vanillate + NADH + O2 + H(+) = 3,4-dihydroxybenzoate + formaldehyde + NAD(+) + H2O. It functions in the pathway xenobiotic degradation; vanillyl-alcohol degradation. This Pseudomonas sp. (strain HR199 / DSM 7063) protein is Vanillate O-demethylase oxygenase subunit (vanA).